The primary structure comprises 344 residues: Outer membrane protein A (344 aa).

Residues 1 to 14 (MKAIFVLNAAPKDN) lie on the Periplasmic side of the membrane. Residues 15 to 24 (TWYAGGKLGW) traverse the membrane as a beta stranded segment. Over 25 to 49 (SQYHDTGFYGNGFQNNNGPTRNDQL) the chain is Extracellular. A beta stranded transmembrane segment spans residues 50–59 (GAGAFGGYQV). Topologically, residues 60–62 (NPY) are periplasmic. The chain crosses the membrane as a beta stranded span at residues 63–71 (LGFEMGYDW). Residues 72 to 89 (LGRMAYKGSVDNGAFKAQ) are Extracellular-facing. Residues 90–100 (GVQLTAKLGYP) form a beta stranded membrane-spanning segment. Residues 101–104 (ITDD) are Periplasmic-facing. The chain crosses the membrane as a beta stranded span at residues 105–114 (LDIYTRLGGM). The Extracellular portion of the chain corresponds to 115 to 139 (VWRADSKGNYASTGVSRSEHDTGVS). The chain crosses the membrane as a beta stranded span at residues 140 to 149 (PVFAGGVEWA). The Periplasmic portion of the chain corresponds to 150-153 (VTRD). Residues 154–162 (IATRLEYQW) traverse the membrane as a beta stranded segment. The Extracellular segment spans residues 163–179 (VNNIGDAGTVGTRPDNG). Residues 180–188 (MLSLGVSYR) traverse the membrane as a beta stranded segment. The Periplasmic portion of the chain corresponds to 189–344 (FGQEDAAPVV…YKEVVTQPQA (156 aa)). Repeat copies occupy residues 199 to 200 (AP), 201 to 202 (AP), 203 to 204 (AP), and 205 to 206 (AP). Residues 199–206 (APAPAPAP) are 4 X 2 AA tandem repeats of A-P. Residues 208–336 (VATKHFTLKS…RVEIEVKGYK (129 aa)) form the OmpA-like domain. Cys-309 and Cys-321 are joined by a disulfide.

This sequence belongs to the outer membrane OOP (TC 1.B.6) superfamily. OmpA family. In terms of assembly, monomer and homodimer.

It localises to the cell outer membrane. In terms of biological role, with TolR probably plays a role in maintaining the position of the peptidoglycan cell wall in the periplasm. Acts as a porin with low permeability that allows slow penetration of small solutes; an internal gate slows down solute passage. Its function is as follows. Required for conjugation with F-type plasmids; probably serves as the mating receptor on recipient cells. The sequence is that of Outer membrane protein A from Klebsiella pneumoniae.